The primary structure comprises 96 residues: UPF0235 protein Tola_0962 (96 aa).

Belongs to the UPF0235 family.

The sequence is that of UPF0235 protein Tola_0962 from Tolumonas auensis (strain DSM 9187 / NBRC 110442 / TA 4).